Consider the following 461-residue polypeptide: Smoothelin-like protein 2 (461 aa).

Residues 55 to 88 are a coiled coil; sequence PLARTVADLQRDNQRLQAQLERLTRQVEALGLAS. Disordered regions lie at residues 87 to 193 and 227 to 248; these read ASGM…LRLP and LNPSPSEVITPWTPSPSEKNSS. Over residues 94–107 the composition is skewed to pro residues; it reads PGTPGTPSPPPAPG. Thr96 carries the phosphothreonine modification. A phosphoserine mark is found at Ser101, Ser129, and Ser134. A compositionally biased stretch (basic and acidic residues) spans 134–147; the sequence is SLDHDEASESEMRK. A phosphoserine mark is found at Ser256 and Ser269. The tract at residues 260–307 is disordered; that stretch reads AVTASKHSNSPPLVTPPQSPVSPQPPAITQVHRQGERRRELVRSQTLP. Over residues 272–285 the composition is skewed to pro residues; the sequence is LVTPPQSPVSPQPP. Thr274 carries the post-translational modification Phosphothreonine. Phosphoserine is present on Ser278. Over residues 292 to 301 the composition is skewed to basic and acidic residues; it reads RQGERRRELV. Ser344 is modified (phosphoserine). Residues 351–458 form the Calponin-homology (CH) domain; sequence SSIKQILLEW…YVQSLYNHLR (108 aa).

This sequence belongs to the smoothelin family.

In Homo sapiens (Human), this protein is Smoothelin-like protein 2 (SMTNL2).